We begin with the raw amino-acid sequence, 204 residues long: GTP cyclohydrolase-2 (204 aa).

R49 to E53 provides a ligand contact to GTP. Residues C54, C65, and C67 each contribute to the Zn(2+) site. GTP contacts are provided by residues Q70, E92 to R94, and T114. The active-site Proton acceptor is D126. Catalysis depends on R128, which acts as the Nucleophile. GTP-binding residues include T149 and K154.

The protein belongs to the GTP cyclohydrolase II family. The cofactor is Zn(2+).

It carries out the reaction GTP + 4 H2O = 2,5-diamino-6-hydroxy-4-(5-phosphoribosylamino)-pyrimidine + formate + 2 phosphate + 3 H(+). It participates in cofactor biosynthesis; riboflavin biosynthesis; 5-amino-6-(D-ribitylamino)uracil from GTP: step 1/4. In terms of biological role, catalyzes the conversion of GTP to 2,5-diamino-6-ribosylamino-4(3H)-pyrimidinone 5'-phosphate (DARP), formate and pyrophosphate. The sequence is that of GTP cyclohydrolase-2 from Shewanella baltica (strain OS155 / ATCC BAA-1091).